Consider the following 141-residue polypeptide: Hemoglobin subunit alpha-1/2 (141 aa).

Positions 1-141 constitute a Globin domain; that stretch reads VLSAABKSBV…VSTVLTSKYR (141 aa). S3 is subject to Phosphoserine. N6-succinyllysine is present on residues K7 and K11. K16 is modified (N6-acetyllysine; alternate). K16 carries the N6-succinyllysine; alternate modification. Y24 is subject to Phosphotyrosine. At S35 the chain carries Phosphoserine. An N6-succinyllysine modification is found at K40. S49 carries the phosphoserine modification. H58 is a binding site for O2. H87 serves as a coordination point for heme b. Position 102 is a phosphoserine (S102). T108 carries the phosphothreonine modification. S124 is subject to Phosphoserine. T134 and T137 each carry phosphothreonine. A Phosphoserine modification is found at S138.

Belongs to the globin family. Heterotetramer of two alpha chains and two beta chains. As to expression, red blood cells.

Involved in oxygen transport from the lung to the various peripheral tissues. This is Hemoglobin subunit alpha-1/2 from Odocoileus virginianus virginianus (Virginia white-tailed deer).